Reading from the N-terminus, the 372-residue chain is AA9 family lytic polysaccharide monooxygenase C (372 aa).

The N-terminal stretch at 1 to 16 (MFRSALFLLLAPLALS) is a signal peptide. H17 and H99 together coordinate Cu(2+). C59 and C189 are oxidised to a cystine. Residues H174 and Q184 each coordinate O2. Y186 lines the Cu(2+) pocket.

This sequence belongs to the polysaccharide monooxygenase AA9 family. Cu(2+) serves as cofactor.

It is found in the secreted. The catalysed reaction is [(1-&gt;4)-beta-D-glucosyl]n+m + reduced acceptor + O2 = 4-dehydro-beta-D-glucosyl-[(1-&gt;4)-beta-D-glucosyl]n-1 + [(1-&gt;4)-beta-D-glucosyl]m + acceptor + H2O.. In terms of biological role, lytic polysaccharide monooxygenase (LPMO) that depolymerizes crystalline and amorphous polysaccharides via the oxidation of scissile alpha- or beta-(1-4)-glycosidic bonds, yielding C1 or C4 oxidation products. Catalysis by LPMOs requires the reduction of the active-site copper from Cu(II) to Cu(I) by a reducing agent and H(2)O(2) or O(2) as a cosubstrate. This Aspergillus tamarii protein is AA9 family lytic polysaccharide monooxygenase C.